The following is a 136-amino-acid chain: Small ribosomal subunit protein uS8c (136 aa).

This sequence belongs to the universal ribosomal protein uS8 family. As to quaternary structure, part of the 30S ribosomal subunit.

Its subcellular location is the plastid. One of the primary rRNA binding proteins, it binds directly to 16S rRNA central domain where it helps coordinate assembly of the platform of the 30S subunit. The sequence is that of Small ribosomal subunit protein uS8c (rps8) from Helicosporidium sp. subsp. Simulium jonesii (Green alga).